We begin with the raw amino-acid sequence, 169 residues long: General odorant-binding protein 57a (169 aa).

Residues 1-20 (MFNTRLAIFLLLIVVSLSQA) form the signal peptide. 3 disulfides stabilise this stretch: cysteine 39/cysteine 77, cysteine 73/cysteine 120, and cysteine 111/cysteine 129.

This sequence belongs to the PBP/GOBP family.

Present in the aqueous fluid surrounding olfactory sensory dendrites and are thought to aid in the capture and transport of hydrophobic odorants into and through this fluid. The protein is General odorant-binding protein 57a of Drosophila melanogaster (Fruit fly).